The chain runs to 258 residues: Tryptophan synthase alpha chain (258 aa).

Active-site proton acceptor residues include glutamate 47 and aspartate 58.

Belongs to the TrpA family. As to quaternary structure, tetramer of two alpha and two beta chains.

The catalysed reaction is (1S,2R)-1-C-(indol-3-yl)glycerol 3-phosphate + L-serine = D-glyceraldehyde 3-phosphate + L-tryptophan + H2O. The protein operates within amino-acid biosynthesis; L-tryptophan biosynthesis; L-tryptophan from chorismate: step 5/5. In terms of biological role, the alpha subunit is responsible for the aldol cleavage of indoleglycerol phosphate to indole and glyceraldehyde 3-phosphate. The protein is Tryptophan synthase alpha chain of Bacillus cereus (strain ATCC 10987 / NRS 248).